The primary structure comprises 389 residues: Adenylyltransferase and sulfurtransferase uba4 (389 aa).

ATP contacts are provided by residues G40, D61, 68 to 72, K85, and 129 to 130; these read SNLHR and DT. Positions 171 and 174 each coordinate Zn(2+). C188 functions as the Glycyl thioester intermediate; for adenylyltransferase activity in the catalytic mechanism. Residues C252 and C255 each coordinate Zn(2+). The Rhodanese domain maps to 298–387; the sequence is AQRAPYLVDV…WSRQIDPNFP (90 aa). Residue C347 is the Cysteine persulfide intermediate of the active site.

The protein in the N-terminal section; belongs to the HesA/MoeB/ThiF family. UBA4 subfamily. Zn(2+) is required as a cofactor.

It is found in the cytoplasm. Its subcellular location is the cytosol. It carries out the reaction [molybdopterin-synthase sulfur-carrier protein]-C-terminal Gly-Gly + ATP + H(+) = [molybdopterin-synthase sulfur-carrier protein]-C-terminal Gly-Gly-AMP + diphosphate. The enzyme catalyses [molybdopterin-synthase sulfur-carrier protein]-C-terminal Gly-Gly-AMP + S-sulfanyl-L-cysteinyl-[cysteine desulfurase] + AH2 = [molybdopterin-synthase sulfur-carrier protein]-C-terminal-Gly-aminoethanethioate + L-cysteinyl-[cysteine desulfurase] + A + AMP + 2 H(+). It participates in tRNA modification; 5-methoxycarbonylmethyl-2-thiouridine-tRNA biosynthesis. The protein operates within cofactor biosynthesis; molybdopterin biosynthesis. Its function is as follows. Plays a central role in 2-thiolation of mcm(5)S(2)U at tRNA wobble positions of cytosolic tRNA(Lys), tRNA(Glu) and tRNA(Gln). Also essential during biosynthesis of the molybdenum cofactor. Acts by mediating the C-terminal thiocarboxylation of sulfur carriers URM1 and CNX5/MOCS2A. Its N-terminus first activates urm1 and mocs2a as acyl-adenylates (-COAMP), then the persulfide sulfur on the catalytic cysteine is transferred to URM1 and CNX5/MOCS2A to form thiocarboxylation (-COSH) of their C-terminus. The reaction probably involves hydrogen sulfide that is generated from the persulfide intermediate and that acts as a nucleophile towards URM1 and CNX5/MOCS2A. Subsequently, a transient disulfide bond is formed. Does not use thiosulfate as sulfur donor; NFS1 probably acting as a sulfur donor for thiocarboxylation reactions. Required for growth on nitrate as a sole nitrogen source. The polypeptide is Adenylyltransferase and sulfurtransferase uba4 (Ogataea parapolymorpha (strain ATCC 26012 / BCRC 20466 / JCM 22074 / NRRL Y-7560 / DL-1) (Yeast)).